A 692-amino-acid polypeptide reads, in one-letter code: Proprotein convertase subtilisin/kexin type 9 (692 aa).

Positions 1–30 (MGTVSSRRSWWPLPLLLLLLLLLGPAGARA) are cleaved as a signal peptide. The propeptide occupies 31–152 (QEDEDGDYEE…IEEDSSVFAQ (122 aa)). Tyr38 is subject to Sulfotyrosine. Position 47 is a phosphoserine (Ser47). The 73-residue stretch at 77–149 (TYVVVLKEET…VDYIEEDSSV (73 aa)) folds into the Inhibitor I9 domain. A Peptidase S8 domain is found at 155-461 (PWNLERITPP…GWQLFCRTVW (307 aa)). Residues Asp186 and His226 each act as charge relay system in the active site. Disulfide bonds link Cys223/Cys255 and Cys323/Cys358. Ser386 acts as the Charge relay system in catalysis. The segment at 450 to 692 (GAGWQLFCRT…HLAQASQELQ (243 aa)) is C-terminal domain. 3 disulfide bridges follow: Cys457–Cys527, Cys477–Cys526, and Cys486–Cys509. Asn533 carries an N-linked (GlcNAc...) asparagine glycan. Disulfide bonds link Cys534-Cys601, Cys552-Cys600, Cys562-Cys588, Cys608-Cys679, Cys626-Cys678, and Cys635-Cys654. Position 688 is a phosphoserine (Ser688).

The protein belongs to the peptidase S8 family. Monomer. Can self-associate to form dimers and higher multimers which may have increased LDLR degrading activity. The precursor protein but not the mature protein may form multimers. Interacts with APOB, VLDLR, LRP8/APOER2 and BACE1. The full-length immature form (pro-PCSK9) interacts with SCNN1A, SCNN1B and SCNN1G. The pro-PCSK9 form (via C-terminal domain) interacts with LDLR. Interacts (via the C-terminal domain) with ANXA2 (via repeat Annexin 1); the interaction inhibits the degradation of LDLR. Requires Ca(2+) as cofactor. Post-translationally, cleavage by furin and PCSK5 generates a truncated inactive protein that is unable to induce LDLR degradation. Undergoes autocatalytic cleavage in the endoplasmic reticulum to release the propeptide from the N-terminus and the cleavage of the propeptide is strictly required for its maturation and activation. The cleaved propeptide however remains associated with the catalytic domain through non-covalent interactions, preventing potential substrates from accessing its active site. As a result, it is secreted from cells as a propeptide-containing, enzymatically inactive protein. In terms of processing, phosphorylation protects the propeptide against proteolysis.

It localises to the cytoplasm. It is found in the secreted. Its subcellular location is the endosome. The protein resides in the lysosome. The protein localises to the cell surface. It localises to the endoplasmic reticulum. It is found in the golgi apparatus. With respect to regulation, its proteolytic activity is autoinhibited by the non-covalent binding of the propeptide to the catalytic domain. Inhibited by EGTA. In terms of biological role, crucial player in the regulation of plasma cholesterol homeostasis. Binds to low-density lipid receptor family members: low density lipoprotein receptor (LDLR), very low density lipoprotein receptor (VLDLR), apolipoprotein E receptor (LRP1/APOER) and apolipoprotein receptor 2 (LRP8/APOER2), and promotes their degradation in intracellular acidic compartments. Acts via a non-proteolytic mechanism to enhance the degradation of the hepatic LDLR through a clathrin LDLRAP1/ARH-mediated pathway. May prevent the recycling of LDLR from endosomes to the cell surface or direct it to lysosomes for degradation. Can induce ubiquitination of LDLR leading to its subsequent degradation. Inhibits intracellular degradation of APOB via the autophagosome/lysosome pathway in a LDLR-independent manner. Involved in the disposal of non-acetylated intermediates of BACE1 in the early secretory pathway. Inhibits epithelial Na(+) channel (ENaC)-mediated Na(+) absorption by reducing ENaC surface expression primarily by increasing its proteasomal degradation. Regulates neuronal apoptosis via modulation of LRP8/APOER2 levels and related anti-apoptotic signaling pathways. This is Proprotein convertase subtilisin/kexin type 9 (PCSK9) from Pan troglodytes (Chimpanzee).